Consider the following 900-residue polypeptide: Translation initiation factor IF-2 (900 aa).

Disordered regions lie at residues 30–77 and 89–291; these read GEFV…SLDK and NGKA…YDSM. Over residues 89–112 the composition is skewed to low complexity; sequence NGKATAAPAKAADSGGAAIVSPTT. Residues 113 to 129 show a composition bias toward pro residues; sequence PAAPEPPTAVPPSPQAP. A compositionally biased stretch (low complexity) spans 175–187; that stretch reads PGTARPGVPRPGA. Residues 215–271 are compositionally biased toward gly residues; sequence GRPGAPGAGRSDAGGGNYRGGGVGAAPGTGFRGRPGGGGGGRPGQRGGAAGAFGRPG. The span at 275 to 284 shows a compositional bias: basic residues; the sequence is RRGRKSKRQK. The tr-type G domain maps to 396–567; it reads VRPPVVTVMG…AVLLTADAAL (172 aa). The interval 405-412 is G1; sequence GHVDHGKT. 405 to 412 is a GTP binding site; it reads GHVDHGKT. The segment at 430–434 is G2; that stretch reads GITQH. The segment at 455–458 is G3; that stretch reads DTPG. GTP contacts are provided by residues 455–459 and 509–512; these read DTPGH and NKID. Positions 509-512 are G4; it reads NKID. Positions 545–547 are G5; the sequence is SAK.

Belongs to the TRAFAC class translation factor GTPase superfamily. Classic translation factor GTPase family. IF-2 subfamily.

It localises to the cytoplasm. In terms of biological role, one of the essential components for the initiation of protein synthesis. Protects formylmethionyl-tRNA from spontaneous hydrolysis and promotes its binding to the 30S ribosomal subunits. Also involved in the hydrolysis of GTP during the formation of the 70S ribosomal complex. This chain is Translation initiation factor IF-2, found in Mycobacterium bovis (strain BCG / Pasteur 1173P2).